Here is a 125-residue protein sequence, read N- to C-terminus: Synaptobrevin (125 aa).

A disordered region spans residues 1–46 (MSGPQNPQAGPGGPPSGPPQPGGPPGPPQGPPQPVQQSKRLQQTQA). The Cytoplasmic segment spans residues 1 to 103 (MSGPQNPQAG…KRKFWWKNCK (103 aa)). Residues 12 to 34 (GGPPSGPPQPGGPPGPPQGPPQP) show a composition bias toward pro residues. A v-SNARE coiled-coil homology domain is found at 40-100 (RLQQTQAQVE…GKLKRKFWWK (61 aa)). Residues 104–123 (MMIILGGIVAVIVTVIIVWA) traverse the membrane as a helical; Anchor for type IV membrane protein segment. The Vesicular portion of the chain corresponds to 124–125 (AT).

This sequence belongs to the synaptobrevin family.

The protein localises to the cytoplasmic vesicle. Its subcellular location is the secretory vesicle. It is found in the synaptic vesicle membrane. The protein resides in the synapse. It localises to the synaptosome. In terms of biological role, intrinsic membrane protein of small synaptic vesicles. The protein is Synaptobrevin of Doryteuthis pealeii (Longfin inshore squid).